A 436-amino-acid chain; its full sequence is Gamma-glutamyl phosphate reductase (436 aa).

This sequence belongs to the gamma-glutamyl phosphate reductase family.

The protein resides in the cytoplasm. The enzyme catalyses L-glutamate 5-semialdehyde + phosphate + NADP(+) = L-glutamyl 5-phosphate + NADPH + H(+). Its pathway is amino-acid biosynthesis; L-proline biosynthesis; L-glutamate 5-semialdehyde from L-glutamate: step 2/2. Catalyzes the NADPH-dependent reduction of L-glutamate 5-phosphate into L-glutamate 5-semialdehyde and phosphate. The product spontaneously undergoes cyclization to form 1-pyrroline-5-carboxylate. This Prochlorococcus marinus (strain AS9601) protein is Gamma-glutamyl phosphate reductase.